The sequence spans 389 residues: Growth/differentiation factor 2 (389 aa).

The signal sequence occupies residues 1–20 (MWRVGHLLLLMSIVFRITEE). The propeptide occupies 21–280 (KSLGDAGSLE…PVSNRHRRRK (260 aa)). N-linked (GlcNAc...) asparagine glycosylation is found at Asn-65, Asn-118, Asn-127, and Asn-232. A compositionally biased stretch (polar residues) spans 263 to 272 (QQQVGNQAPV). Residues 263–284 (QQQVGNQAPVSNRHRRRKRKAK) form a disordered region. A compositionally biased stretch (basic residues) spans 274–284 (NRHRRRKRKAK). 3 disulfides stabilise this stretch: Cys-288-Cys-354, Cys-317-Cys-386, and Cys-321-Cys-388. An N-linked (GlcNAc...) asparagine glycan is attached at Asn-342.

It belongs to the TGF-beta family. As to quaternary structure, homodimer; disulfide-linked. In terms of processing, a reversible disulfide bond can be formed between the two subunits in the homodimer; this has no effect on gdf2 activity.

The protein localises to the secreted. In terms of biological role, potent circulating inhibitor of angiogenesis. Signals through the type I activin receptor ACVRL1 but not other Alks. Signaling through SMAD1 in endothelial cells requires TGF-beta coreceptor endoglin/eng. The protein is Growth/differentiation factor 2 (gdf2) of Danio rerio (Zebrafish).